The chain runs to 640 residues: tRNA-dihydrouridine(47) synthase [NAD(P)(+)]-like (640 aa).

Residues 1–11 show a composition bias toward polar residues; the sequence is MAESEGSNTEN. 2 disordered regions span residues 1 to 23 and 43 to 123; these read MAES…ENLD and FIDA…HSQF. The segment covering 43-57 has biased composition (basic and acidic residues); sequence FIDADGKDVTEKETC. Positions 58–72 are enriched in polar residues; the sequence is SELSLNDAENTTRTE. Residues 77–86 show a composition bias toward basic and acidic residues; that stretch reads PEAKRIKLDD. Basic residues predominate over residues 104-120; the sequence is EKKRARGQNKSRPHMKH. 2 C3H1-type zinc fingers span residues 123-153 and 161-191; these read FEEN…HDVA and EDIR…HLGE. Residues 301–303 and Gln-355 each bind FMN; that span reads PLT. Catalysis depends on Cys-386, which acts as the Proton donor. Residues Lys-425, His-455, 487 to 489, and 510 to 511 contribute to the FMN site; these read NGD and AR.

Belongs to the Dus family. Dus3 subfamily. FMN is required as a cofactor.

The catalysed reaction is 5,6-dihydrouridine(47) in tRNA + NAD(+) = uridine(47) in tRNA + NADH + H(+). It catalyses the reaction 5,6-dihydrouridine(47) in tRNA + NADP(+) = uridine(47) in tRNA + NADPH + H(+). The enzyme catalyses a 5,6-dihydrouridine in mRNA + NAD(+) = a uridine in mRNA + NADH + H(+). It carries out the reaction a 5,6-dihydrouridine in mRNA + NADP(+) = a uridine in mRNA + NADPH + H(+). Functionally, catalyzes the synthesis of dihydrouridine, a modified base, in various RNAs, such as tRNAs, mRNAs and some long non-coding RNAs (lncRNAs). Mainly modifies the uridine in position 47 (U47) in the D-loop of most cytoplasmic tRNAs. Also able to mediate the formation of dihydrouridine in some mRNAs, thereby regulating their translation. This Xenopus laevis (African clawed frog) protein is tRNA-dihydrouridine(47) synthase [NAD(P)(+)]-like (dus3l).